The chain runs to 388 residues: 4-hydroxy-3-methylbut-2-en-1-yl diphosphate synthase (flavodoxin) (388 aa).

Residues cysteine 280, cysteine 283, cysteine 315, and glutamate 322 each contribute to the [4Fe-4S] cluster site. A disordered region spans residues 369–388 (MNSEGGPEATSSGSPVVTVS). The span at 377–388 (ATSSGSPVVTVS) shows a compositional bias: polar residues.

Belongs to the IspG family. [4Fe-4S] cluster is required as a cofactor.

It carries out the reaction (2E)-4-hydroxy-3-methylbut-2-enyl diphosphate + oxidized [flavodoxin] + H2O + 2 H(+) = 2-C-methyl-D-erythritol 2,4-cyclic diphosphate + reduced [flavodoxin]. It participates in isoprenoid biosynthesis; isopentenyl diphosphate biosynthesis via DXP pathway; isopentenyl diphosphate from 1-deoxy-D-xylulose 5-phosphate: step 5/6. Its function is as follows. Converts 2C-methyl-D-erythritol 2,4-cyclodiphosphate (ME-2,4cPP) into 1-hydroxy-2-methyl-2-(E)-butenyl 4-diphosphate. This chain is 4-hydroxy-3-methylbut-2-en-1-yl diphosphate synthase (flavodoxin), found in Mycolicibacterium paratuberculosis (strain ATCC BAA-968 / K-10) (Mycobacterium paratuberculosis).